Reading from the N-terminus, the 388-residue chain is Succinate--CoA ligase [ADP-forming] subunit beta (388 aa).

Residues 9–244 (KSLFAEYGLP…PSQDDAREAH (236 aa)) form the ATP-grasp domain. Residues Lys46, 53–55 (GRG), Glu99, Thr102, and Glu107 each bind ATP. 2 residues coordinate Mg(2+): Asn199 and Asp213. Residues Asn264 and 321-323 (GIV) each bind substrate.

The protein belongs to the succinate/malate CoA ligase beta subunit family. As to quaternary structure, heterotetramer of two alpha and two beta subunits. It depends on Mg(2+) as a cofactor.

It catalyses the reaction succinate + ATP + CoA = succinyl-CoA + ADP + phosphate. The enzyme catalyses GTP + succinate + CoA = succinyl-CoA + GDP + phosphate. Its pathway is carbohydrate metabolism; tricarboxylic acid cycle; succinate from succinyl-CoA (ligase route): step 1/1. Its function is as follows. Succinyl-CoA synthetase functions in the citric acid cycle (TCA), coupling the hydrolysis of succinyl-CoA to the synthesis of either ATP or GTP and thus represents the only step of substrate-level phosphorylation in the TCA. The beta subunit provides nucleotide specificity of the enzyme and binds the substrate succinate, while the binding sites for coenzyme A and phosphate are found in the alpha subunit. The polypeptide is Succinate--CoA ligase [ADP-forming] subunit beta (Shewanella baltica (strain OS195)).